The following is a 503-amino-acid chain: Maturase K (503 aa).

This sequence belongs to the intron maturase 2 family. MatK subfamily.

It is found in the plastid. Its subcellular location is the chloroplast. Its function is as follows. Usually encoded in the trnK tRNA gene intron. Probably assists in splicing its own and other chloroplast group II introns. This Eucalyptus globulus (Tasmanian blue gum) protein is Maturase K.